The sequence spans 747 residues: Beta-glucosidase BoGH3A (747 aa).

Residues 1 to 26 (MIIGIMKTFLLTICFLSVQTGMVAIA) form the signal peptide. Asp273 is a catalytic residue.

The protein belongs to the glycosyl hydrolase 3 family.

Its subcellular location is the periplasm. The enzyme catalyses Hydrolysis of terminal, non-reducing beta-D-glucosyl residues with release of beta-D-glucose.. Its pathway is glucan metabolism; xyloglucan degradation. Functionally, catalyzes the hydrolysis of terminal, non-reducing beta-D-glucosyl residues with release of beta-D-glucose in xyloglucan degradation, leading to remove the backbone 'G' units. The protein is Beta-glucosidase BoGH3A of Bacteroides ovatus (strain ATCC 8483 / DSM 1896 / JCM 5824 / BCRC 10623 / CCUG 4943 / NCTC 11153).